The primary structure comprises 663 residues: Polyunsaturated fatty acid lipoxygenase ALOX15 (663 aa).

Positions 2–115 constitute a PLAT domain; the sequence is GLYRVRVSTG…ILSLPEGTAR (114 aa). Positions 116-663 constitute a Lipoxygenase domain; that stretch reads TVVDDPQGLF…PSRVENSVAI (548 aa). Residues His361, His366, His541, His545, and Ile663 each contribute to the Fe cation site.

It belongs to the lipoxygenase family. Interacts with PEBP1; in response to IL13/interleukin-13, prevents the interaction of PEBP1 with RAF1 to activate the ERK signaling cascade. Fe cation serves as cofactor.

The protein localises to the cytoplasm. Its subcellular location is the cytosol. The protein resides in the cell membrane. It is found in the lipid droplet. The catalysed reaction is (5Z,8Z,11Z,14Z)-eicosatetraenoate + O2 = (12S)-hydroperoxy-(5Z,8Z,10E,14Z)-eicosatetraenoate. It catalyses the reaction (5Z,8Z,11Z,14Z)-eicosatetraenoate + O2 = (15S)-hydroperoxy-(5Z,8Z,11Z,13E)-eicosatetraenoate. It carries out the reaction (9Z,12Z)-octadecadienoate + O2 = (13S)-hydroperoxy-(9Z,11E)-octadecadienoate. The enzyme catalyses (5Z,8Z,11Z,14Z)-eicosatetraenoate + 2 O2 = (14R,15S)-dihydroperoxy-(5Z,8Z,10E,12E)-eicosatetraenoate. The catalysed reaction is (5Z,8Z,11Z,14Z)-eicosatetraenoate + 2 O2 = (8S,15S)-dihydroperoxy-(5Z,9E,11Z,13E)-eicosatetraenoate. It catalyses the reaction (14S,15R)-epoxy-(5Z,8Z,11Z)-eicosatrienoate + O2 = (8S)-hydroperoxy-(14S,15R)-epoxy-(5Z,9E,11Z)-eicosatrienoate. It carries out the reaction (14S,15R)-epoxy-(5Z,8Z,11Z)-eicosatrienoate + O2 = (12S)-hydroperoxy-(14S,15R)-epoxy-(5Z,8Z,10E)-eicosatrienoate. The enzyme catalyses (14R,15S)-epoxy-(5Z,8Z,11Z)-eicosatrienoate + O2 = (5S)-hydroperoxy-(14R,15S)-epoxy-(6E,8Z,11Z)-eicosatrienoate. The catalysed reaction is (14R,15S)-epoxy-(5Z,8Z,11Z)-eicosatrienoate + O2 = (12S)-hydroperoxy-(14R,15S)-epoxy-(5Z,8Z,10E)-eicosatrienoate. It catalyses the reaction (15R)-hydroperoxy-(5Z,8Z,11Z,13E)-eicosatetraenoate = 15-oxo-(5Z,8Z,11Z,13E)-eicosatetraenoate + H2O. It carries out the reaction (15S)-hydroperoxy-(5Z,8Z,11Z,13E)-eicosatetraenoate = (14S,15S)-epoxy-(5Z,8Z,10E,12E)-eicosatetraenoate + H2O. The enzyme catalyses (12S)-hydroperoxy-(5Z,8Z,10E,14Z)-eicosatetraenoate = (8S)-hydroxy-(11S,12S)-epoxy-(5Z,9E,14Z)-eicosatrienoate. The catalysed reaction is (4Z,7Z,10Z,13Z,16Z,19Z)-docosahexaenoate + O2 = 14-hydroperoxy-(4Z,7Z,10Z,12E,16Z,19Z)-docosahexaenoate. It catalyses the reaction (4Z,7Z,10Z,13Z,16Z)-docosapentaenoate + O2 = 14-hydroperoxy-(4Z,7Z,10Z,12E,16Z)-docosapentaenoate. It carries out the reaction (7Z,10Z,13Z,16Z,19Z)-docosapentaenoate + O2 = 14-hydroperoxy-(7Z,10Z,12E,16Z,19Z)-docosapentaenoate. The enzyme catalyses (4Z,7Z,10Z,13Z,16Z,19Z)-docosahexaenoate + O2 = (14S)-hydroperoxy-(4Z,7Z,10Z,12E,16Z,19Z)-docosahexaenoate. The catalysed reaction is (4Z,7Z,10Z,13Z,16Z,19Z)-docosahexaenoate + O2 = (17S)-hydroperoxy-(4Z,7Z,10Z,13Z,15E,19Z)-docosahexaenoate. It catalyses the reaction (7S)-hydroperoxy-(4Z,8E,10Z,13Z,16Z,19Z)-docosahexaenoate + O2 = (7S,14S)-dihydroperoxy-(4Z,8E,10Z,12E,16Z,19Z)-docosahexaenoate. It carries out the reaction (7S)-hydroperoxy-(4Z,8E,10Z,13Z,16Z,19Z)-docosahexaenoate + O2 = (7S,17S)-dihydroperoxy-(4Z,8E,10Z,13Z,15E,19Z)-docosahexaenoate. The enzyme catalyses (4Z,7Z,10Z,13Z,16Z,19Z)-docosahexaenoate + O2 = (11S)-hydroperoxy-(4Z,7Z,9E,13Z,16Z,19Z)-docosahexaenoate. The catalysed reaction is N-(5Z,8Z,11Z,14Z)-eicosatetraenoyl-taurine + O2 = N-(12S)-hydroperoxy-(5Z,8Z,10E,14Z)-eicosatetraenoyl-taurine. It catalyses the reaction N-(5Z,8Z,11Z,14Z)-eicosatetraenoyl-gamma-aminobutanoate + O2 = N-(12S)-hydroperoxy-(5Z,8Z,10E,14Z)-eicosatetraenoyl-gamma-aminobutanoate. It carries out the reaction N-(5Z,8Z,11Z,14Z)-eicosatetraenoyl-glycine + O2 = N-(12S)-hydroperoxy-(5Z,8Z,10E,14Z)-eicosatetraenoyl-glycine. The enzyme catalyses N-(5Z,8Z,11Z,14Z)-eicosatetraenoyl-L-alanine + O2 = N-(12S)-hydroperoxy-(5Z,8Z,10E,14Z)-eicosatetraenoyl-alanine. The catalysed reaction is N-(5Z,8Z,11Z,14Z)-eicosatetraenoyl-taurine + O2 = N-(15S)-hydroperoxy-(5Z,8Z,11Z,13E)-eicosatetraenoyl-taurine. It catalyses the reaction N-(5Z,8Z,11Z,14Z)-eicosatetraenoyl-gamma-aminobutanoate + O2 = N-(15S)-hydroperoxy-(5Z,8Z,11Z,13E)-eicosatetraenoyl-gamma-aminobutanoate. It carries out the reaction N-(5Z,8Z,11Z,14Z)-eicosatetraenoyl-glycine + O2 = N-(15S)-hydroperoxy-(5Z,8Z,11Z,13E)-eicosatetraenoyl-glycine. The enzyme catalyses N-(5Z,8Z,11Z,14Z)-eicosatetraenoyl-L-alanine + O2 = N-(15S)-hydroperoxy-(5Z,8Z,11Z,13E)-eicosatetraenoyl-alanine. Its pathway is lipid metabolism; hydroperoxy eicosatetraenoic acid biosynthesis. Functionally, non-heme iron-containing dioxygenase that catalyzes the stereo-specific peroxidation of free and esterified polyunsaturated fatty acids generating a spectrum of bioactive lipid mediators. It inserts peroxyl groups at C12 or C15 of arachidonate ((5Z,8Z,11Z,14Z)-eicosatetraenoate) producing both 12-hydroperoxyeicosatetraenoate/12-HPETE and 15-hydroperoxyeicosatetraenoate/15-HPETE. It may then act on 12-HPETE to produce hepoxilins, which may show pro-inflammatory properties. Can also peroxidize linoleate ((9Z,12Z)-octadecadienoate) to 13-hydroperoxyoctadecadienoate. May participate in the sequential oxidations of DHA ((4Z,7Z,10Z,13Z,16Z,19Z)-docosahexaenoate) to generate specialized pro-resolving mediators (SPMs)like resolvin D5 ((7S,17S)-diHPDHA) and (7S,14S)-diHPDHA, that actively down-regulate the immune response and have anti-aggregation properties with platelets. Can convert epoxy fatty acids to hydroperoxy-epoxides derivatives followed by an intramolecular nucleophilic substitution leading to the formation of monocyclic endoperoxides. Plays an important role during the maintenance of self-tolerance by peroxidizing membrane-bound phosphatidylethanolamine which can then signal the sorting process for clearance of apoptotic cells during inflammation and prevent an autoimmune response. In addition to its role in the immune and inflammatory responses, this enzyme may play a role in epithelial wound healing in the cornea through production of lipoxin A4 (LXA(4)) and docosahexaenoic acid-derived neuroprotectin D1 (NPD1; 10R,17S-HDHA), both lipid autacoids exhibit anti-inflammatory and neuroprotective properties. Furthermore, it may regulate actin polymerization which is crucial for several biological processes such as the phagocytosis of apoptotic cells. It is also implicated in the generation of endogenous ligands for peroxisome proliferator activated receptor (PPAR-gamma), hence modulating macrophage development and function. It may also exert a negative effect on skeletal development by regulating bone mass through this pathway. As well as participates in ER stress and downstream inflammation in adipocytes, pancreatic islets, and liver. Finally, it is also involved in the cellular response to IL13/interleukin-13. The sequence is that of Polyunsaturated fatty acid lipoxygenase ALOX15 from Sus scrofa (Pig).